The following is a 197-amino-acid chain: 3-isopropylmalate dehydratase small subunit (197 aa).

The protein belongs to the LeuD family. LeuD type 1 subfamily. In terms of assembly, heterodimer of LeuC and LeuD.

It catalyses the reaction (2R,3S)-3-isopropylmalate = (2S)-2-isopropylmalate. The protein operates within amino-acid biosynthesis; L-leucine biosynthesis; L-leucine from 3-methyl-2-oxobutanoate: step 2/4. Its function is as follows. Catalyzes the isomerization between 2-isopropylmalate and 3-isopropylmalate, via the formation of 2-isopropylmaleate. The polypeptide is 3-isopropylmalate dehydratase small subunit (Mycolicibacterium vanbaalenii (strain DSM 7251 / JCM 13017 / BCRC 16820 / KCTC 9966 / NRRL B-24157 / PYR-1) (Mycobacterium vanbaalenii)).